A 187-amino-acid polypeptide reads, in one-letter code: Interferon alpha-1/2 (187 aa).

An N-terminal signal peptide occupies residues 1 to 23; that stretch reads MALPCSFSVALVLLSCHSLCCLA. 2 disulfides stabilise this stretch: Cys-24/Cys-122 and Cys-52/Cys-160. A glycan (N-linked (GlcNAc...) asparagine) is linked at Asn-101.

This sequence belongs to the alpha/beta interferon family.

Its subcellular location is the secreted. Produced by macrophages, IFN-alpha have antiviral activities. Interferon stimulates the production of two enzymes: a protein kinase and an oligoadenylate synthetase. This Canis lupus familiaris (Dog) protein is Interferon alpha-1/2.